The chain runs to 452 residues: MPSVLENILKDKLLEVAVLKKNHALPINIAPSDRDFKKALLEKKTSFILEYKKASPSKGLIRKDFDLLEITKTYEKFASCVSVLADSKYFLGSYENIKIVSQHSTKPILCKDFIIDAFQIKLARVMGSNAVLLMLSVLDDKNYLELFNLAKSLNMSVLTEVSNQQEIERLLKLQYDIIGINNRDLHTLKTDIFHTLELRPLLPKDAIIISESGIYSHAQIKALAPCVNGFLVGSSLMKEKDLKKACIKLILGENKVCGLTRIKDAKAVYKNHFIYGGLIFEKSSPRYIKPKEALKITKAVKKLDFVGVFVKDKIKKIAKIAKKLDLKAVQLYGYSQKEIAQLKKSLPKTCAIWQVVSVADSKDLAPKTKEASLILYDTKGDKMGGNGVSFDWEILENAKTPFMLAGGLNLDNIQKALKIKALGLDFNSGLEISPGIKNKDKIKQLARILREY.

Positions 1–253 are indole-3-glycerol phosphate synthase; that stretch reads MPSVLENILK…KACIKLILGE (253 aa). The tract at residues 254–448 is N-(5'-phosphoribosyl)anthranilate isomerase; it reads NKVCGLTRIK…KDKIKQLARI (195 aa).

The protein in the N-terminal section; belongs to the TrpC family. It in the C-terminal section; belongs to the TrpF family.

The enzyme catalyses N-(5-phospho-beta-D-ribosyl)anthranilate = 1-(2-carboxyphenylamino)-1-deoxy-D-ribulose 5-phosphate. It catalyses the reaction 1-(2-carboxyphenylamino)-1-deoxy-D-ribulose 5-phosphate + H(+) = (1S,2R)-1-C-(indol-3-yl)glycerol 3-phosphate + CO2 + H2O. It functions in the pathway amino-acid biosynthesis; L-tryptophan biosynthesis; L-tryptophan from chorismate: step 3/5. The protein operates within amino-acid biosynthesis; L-tryptophan biosynthesis; L-tryptophan from chorismate: step 4/5. Functionally, bifunctional enzyme that catalyzes two sequential steps of tryptophan biosynthetic pathway. The first reaction is catalyzed by the isomerase, coded by the TrpF domain; the second reaction is catalyzed by the synthase, coded by the TrpC domain. In Helicobacter pylori (strain J99 / ATCC 700824) (Campylobacter pylori J99), this protein is Tryptophan biosynthesis protein TrpCF (trpC).